The following is a 344-amino-acid chain: Meiotic expression up-regulated protein 26 (344 aa).

The protein resides in the nucleus. In Schizosaccharomyces pombe (strain 972 / ATCC 24843) (Fission yeast), this protein is Meiotic expression up-regulated protein 26 (meu26).